Here is a 244-residue protein sequence, read N- to C-terminus: Serine-rich single-pass membrane protein 1 (244 aa).

A helical transmembrane segment spans residues 35-55; that stretch reads CGTIGNFLLWYFVIVFVLMFF. 3 disordered regions span residues 65 to 112, 132 to 191, and 213 to 244; these read DKKD…LTPV, QSQF…LGSY, and HSQQ…FSKF. Basic and acidic residues predominate over residues 80-94; sequence ASKETSYKWQSKDGA. Polar residues-rich tracts occupy residues 97-112 and 132-142; these read PSQT…LTPV and QSQFNEVNQNQ. Basic and acidic residues predominate over residues 161–176; the sequence is SWKESESEHHPSPDSI. Residues 231–244 show a composition bias toward polar residues; it reads ESSISDINTKFSKF.

It is found in the membrane. This chain is Serine-rich single-pass membrane protein 1 (SSMEM1), found in Macaca fascicularis (Crab-eating macaque).